The sequence spans 74 residues: SPbeta prophage-derived uncharacterized HTH-type transcriptional regulator YopS (74 aa).

An HTH cro/C1-type domain is found at 11–66 (IPELCRKKDITINELSEITGIKKQQLSDYNRLVKVDMSIRTAKRIAAALDCNVEDL). A DNA-binding region (H-T-H motif) is located at residues 22-41 (INELSEITGIKKQQLSDYNR).

The chain is SPbeta prophage-derived uncharacterized HTH-type transcriptional regulator YopS (yopS) from Bacillus subtilis (strain 168).